A 162-amino-acid polypeptide reads, in one-letter code: NADH-quinone oxidoreductase subunit I (162 aa).

4Fe-4S ferredoxin-type domains lie at 52-82 (LRRY…IEAG) and 93-122 (TRYD…EGPN). 8 residues coordinate [4Fe-4S] cluster: Cys62, Cys65, Cys68, Cys72, Cys102, Cys105, Cys108, and Cys112.

It belongs to the complex I 23 kDa subunit family. As to quaternary structure, NDH-1 is composed of 14 different subunits. Subunits NuoA, H, J, K, L, M, N constitute the membrane sector of the complex. The cofactor is [4Fe-4S] cluster.

It is found in the cell inner membrane. It carries out the reaction a quinone + NADH + 5 H(+)(in) = a quinol + NAD(+) + 4 H(+)(out). NDH-1 shuttles electrons from NADH, via FMN and iron-sulfur (Fe-S) centers, to quinones in the respiratory chain. The immediate electron acceptor for the enzyme in this species is believed to be ubiquinone. Couples the redox reaction to proton translocation (for every two electrons transferred, four hydrogen ions are translocated across the cytoplasmic membrane), and thus conserves the redox energy in a proton gradient. The chain is NADH-quinone oxidoreductase subunit I from Methylorubrum extorquens (strain PA1) (Methylobacterium extorquens).